Consider the following 353-residue polypeptide: Phosphoribosylformylglycinamidine cyclo-ligase (353 aa).

The protein belongs to the AIR synthase family.

Its subcellular location is the cytoplasm. It carries out the reaction 2-formamido-N(1)-(5-O-phospho-beta-D-ribosyl)acetamidine + ATP = 5-amino-1-(5-phospho-beta-D-ribosyl)imidazole + ADP + phosphate + H(+). The protein operates within purine metabolism; IMP biosynthesis via de novo pathway; 5-amino-1-(5-phospho-D-ribosyl)imidazole from N(2)-formyl-N(1)-(5-phospho-D-ribosyl)glycinamide: step 2/2. This chain is Phosphoribosylformylglycinamidine cyclo-ligase, found in Magnetococcus marinus (strain ATCC BAA-1437 / JCM 17883 / MC-1).